Reading from the N-terminus, the 186-residue chain is ADP-ribosylation factor-like protein 8A (186 aa).

The note=Mediates targeting to membranes intramembrane region spans 1 to 19; the sequence is MIALFNKLLDWFKALFWKE. Residues 29 to 35, 71 to 75, and 130 to 133 contribute to the GTP site; these read QYSGKTT, DIGGQ, and NKRD.

The protein belongs to the small GTPase superfamily. Arf family. As to quaternary structure, interacts with PLEKHM1. When GTP-bound, interacts with RUFY3 and RUFY4, but not with RUFY1, nor RUFY2.

Its subcellular location is the late endosome membrane. It localises to the lysosome membrane. The protein resides in the cytoplasm. The protein localises to the cytoskeleton. It is found in the spindle. Its subcellular location is the cell projection. It localises to the axon. The protein resides in the synapse. Plays a role in lysosomes motility. In neurons, mediates the anterograde axonal long-range transport of presynaptic lysosome-related vesicles required for presynaptic biogenesis and synaptic function. May play a role in chromosome segregation. This Mus musculus (Mouse) protein is ADP-ribosylation factor-like protein 8A (Arl8a).